A 454-amino-acid chain; its full sequence is Allantoinase (454 aa).

His-60, His-62, Lys-147, His-183, His-239, and Asp-312 together coordinate Zn(2+). Position 147 is an N6-carboxylysine (Lys-147).

Belongs to the metallo-dependent hydrolases superfamily. Allantoinase family. As to quaternary structure, homotetramer. Zn(2+) serves as cofactor. Post-translationally, carboxylation allows a single lysine to coordinate two zinc ions.

It carries out the reaction (S)-allantoin + H2O = allantoate + H(+). It functions in the pathway nitrogen metabolism; (S)-allantoin degradation; allantoate from (S)-allantoin: step 1/1. In terms of biological role, catalyzes the conversion of allantoin (5-ureidohydantoin) to allantoic acid by hydrolytic cleavage of the five-member hydantoin ring. The protein is Allantoinase of Rubrobacter xylanophilus (strain DSM 9941 / JCM 11954 / NBRC 16129 / PRD-1).